The chain runs to 616 residues: Nucleoprotein (616 aa).

Short sequence motifs (nuclear localization signal) lie at residues 230-233 (RPKR) and 473-476 (KPKK).

In terms of assembly, homomultimerizes to form the nucleocapsid. Binds to viral genomic RNA. Protein-RNA contacts are mediated by a combination of electrostatic interactions between positively charged residues and the phosphate backbone and planar interactions between aromatic side chains and bases.

The protein resides in the virion. It localises to the host nucleus. Its subcellular location is the host nucleolus. Functionally, encapsidates the negative strand viral RNA, protecting it from nucleases. The encapsidated genomic RNA is termed the ribonucleoprotein (RNP) and serves as template for transcription and replication. This chain is Nucleoprotein, found in Gadus morhua (Atlantic cod).